The chain runs to 880 residues: Alanine--tRNA ligase (880 aa).

Zn(2+) is bound by residues His566, His570, Cys668, and His672.

The protein belongs to the class-II aminoacyl-tRNA synthetase family. It depends on Zn(2+) as a cofactor.

The protein localises to the cytoplasm. It catalyses the reaction tRNA(Ala) + L-alanine + ATP = L-alanyl-tRNA(Ala) + AMP + diphosphate. Catalyzes the attachment of alanine to tRNA(Ala) in a two-step reaction: alanine is first activated by ATP to form Ala-AMP and then transferred to the acceptor end of tRNA(Ala). Also edits incorrectly charged Ser-tRNA(Ala) and Gly-tRNA(Ala) via its editing domain. This Acetivibrio thermocellus (strain ATCC 27405 / DSM 1237 / JCM 9322 / NBRC 103400 / NCIMB 10682 / NRRL B-4536 / VPI 7372) (Clostridium thermocellum) protein is Alanine--tRNA ligase.